The primary structure comprises 150 residues: Putative ribosome maturation factor RimP (150 aa).

Belongs to the RimP family.

It localises to the cytoplasm. Required for maturation of 30S ribosomal subunits. The polypeptide is Putative ribosome maturation factor RimP (Mycobacterium leprae (strain TN)).